A 2514-amino-acid chain; its full sequence is Highly reducing polyketide synthase sphB (2514 aa).

Residues 66-486 (QVPIAICGMA…GANAHVILES (421 aa)) enclose the Ketosynthase family 3 (KS3) domain. Catalysis depends on for beta-ketoacyl synthase activity residues Cys-238, His-374, and His-409. Residues 580–904 (MVFTGQGAQW…AIGALHSLNV (325 aa)) form the Malonyl-CoA:ACP transacylase (MAT) domain. The interval 950–1079 (HDLLGARVAE…GEVCAQSSAP (130 aa)) is N-terminal hotdog fold. Positions 950 to 1240 (HDLLGARVAE…AADISDTHAA (291 aa)) constitute a PKS/mFAS DH domain. Catalysis depends on His-982, which acts as the Proton acceptor; for dehydratase activity. Positions 1089-1240 (PRTLNVRKWY…AADISDTHAA (152 aa)) are C-terminal hotdog fold. Asp-1150 functions as the Proton donor; for dehydratase activity in the catalytic mechanism. A methyltransferase (CMet) domain region spans residues 1319-1578 (WTGLDHEAIS…EPHQVTTTMV (260 aa)). The 314-residue stretch at 1779–2092 (GRVNSLHYAR…KGQHIGRVGV (314 aa)) folds into the Enoyl reductase (ER) domain. Residues 2120–2297 (ASYLMVGGLG…ASVVDMGAVE (178 aa)) form the Ketoreductase (KR) domain. Residues 2427 to 2504 (EAAKLFAVEI…ILGQYAANEV (78 aa)) enclose the Carrier domain. Ser-2464 bears the O-(pantetheine 4'-phosphoryl)serine mark.

The cofactor is pantetheine 4'-phosphate.

The enzyme catalyses holo-[ACP] + 8 malonyl-CoA + acetyl-CoA + 5 AH2 + 8 NADPH + 16 H(+) = (3R)-hydroxyoctadeca-4,10-dienoyl-[ACP] + 5 A + 8 CO2 + 8 NADP(+) + 9 CoA + 7 H2O. Its pathway is secondary metabolite biosynthesis. In terms of biological role, highly reducing polyketide synthase; part of the gene cluster that mediates the biosynthesis of sphingofungins, bioactive molecules acting as sphingolipid inhibitors via inhibiting serine palmitoyl transferase (SPT). Within the pathway, sphB catalyzes the first step of sphingofungin biosynthesis by condensing 8 units of malonyl-CoA with one starter unit of acetyl-CoA, leading to an C18 polyketide precursor 3-hydroxyoctadeca-4,10-dienoyl-ACP containing one delta-6 desaturation and one delta-12 desaturation. The PKS sphB does not contain any putative thioesterase domain for releasing the nascent polyketide chain and it has been suggested that aminoacyl transferases can facilitate the polyketide chain release. The aminoacyl transferase sphA uses the sphB product to produce 3-keto-presphingofungin by adding an aminomalonate molecule. SphF then reduces the C-3 ketone of 3-keto-presphingofungin which leads to presphingofungin. The cytochrome P450 monooxygenase sphH converts presphingofungin into sphingofungin B1 which is further converted to sphingofungin B by the dioxygenase sphC. SphC is also able to convert presphingofungin into sphingofungin B2. The acetyltransferase sphE acetylates sphingofungin B to produce sphingofungin C, but can also convert sphingofungin B1 into sphingofungin C1 and sphingofungin B2 into sphingofungin C2. Finally, sphingofungin C can be spontaneously converted into sphingofungin D. The chain is Highly reducing polyketide synthase sphB from Aspergillus fumigatus (strain CBS 144.89 / FGSC A1163 / CEA10) (Neosartorya fumigata).